The chain runs to 723 residues: Transmembrane channel-like protein 7 (723 aa).

Disordered regions lie at residues 1–28 (MSES…LSLD) and 51–71 (RRRT…KPTD). Residues 1 to 168 (MSESSGSALQ…GIQSYFSFLR (168 aa)) are Extracellular-facing. N-linked (GlcNAc...) asparagine glycosylation occurs at Asn-24. An N-linked (GlcNAc...) asparagine glycan is attached at Asn-84. Phosphoserine is present on Ser-89. N-linked (GlcNAc...) asparagine glycosylation is present at Asn-96. A helical transmembrane segment spans residues 169-189 (FLVLLNLVIFLIIFMLVLLPV). Topologically, residues 190–219 (LLTKYKITNSSFVLIPFKDMDKQCTVYPVS) are cytoplasmic. Residues 220–240 (SSGLIYFYSYIIDLLSGTGFL) form a helical membrane-spanning segment. The Extracellular portion of the chain corresponds to 241–263 (EETSLFYGHYTIDGVKFQNFTYD). N-linked (GlcNAc...) asparagine glycosylation is present at Asn-259. Residues 264–284 (LPLAYLLSTIASLALSLLWIV) traverse the membrane as a helical segment. The Cytoplasmic segment spans residues 285–362 (KRSVEGFKIN…EETIRIYSLR (78 aa)). A helical transmembrane segment spans residues 363-383 (LFLNCIVLAVLGACFYAIYVA). Residues 384-404 (TVFSQEHMKKEIDKMVFGENL) are Extracellular-facing. Residues 405-425 (FILYLPSIVITLANFITPMIF) form a helical membrane-spanning segment. At 426 to 494 (AKIIRYEDYS…PCWETQVGQE (69 aa)) the chain is on the cytoplasmic side. A helical transmembrane segment spans residues 495–515 (MYKLMIFDFIIILAVTLFVDF). The Extracellular portion of the chain corresponds to 516 to 555 (PRKLLVTYCSSCKLIQCWGQQEFAIPDNVLGIVYGQTICW). The chain crosses the membrane as a helical span at residues 556-576 (IGAFFSPLLPAIATLKFIIIF). Residues 577–601 (YVKEWSLLYTCRPSPRPFRASNSNF) are Cytoplasmic-facing. The chain crosses the membrane as a helical span at residues 602–622 (FFLLVLLIGLCLAIIPLTISI). Residues 623–665 (SRIPSSKACGPFTNFNTTWEVIPKTVSTFPSSLQSFIHGVTSE) lie on the Extracellular side of the membrane. Asn-638 carries N-linked (GlcNAc...) asparagine glycosylation. A helical membrane pass occupies residues 666–686 (AFAVPFFMIICLIMFYFIALA). Residues 687–723 (GAHKRVVIQLREQLSLESRDKCYLIQKLTEAQRDMRN) lie on the Cytoplasmic side of the membrane.

Belongs to the TMC family. As to quaternary structure, interacts with PIEZO2; the interaction inhibits PIEZO2-conducted mechanically activated currents.

The protein resides in the membrane. Acts as an inhibitory modulator of PIEZO2 mechanosensitive channel in dorsal root ganglion (DRG) neurons through physical interactions or interference with the interaction between PIEZO2 and the cytoskeleton. This is Transmembrane channel-like protein 7 from Homo sapiens (Human).